The sequence spans 370 residues: UDP-N-acetylglucosamine--N-acetylmuramyl-(pentapeptide) pyrophosphoryl-undecaprenol N-acetylglucosamine transferase (370 aa).

UDP-N-acetyl-alpha-D-glucosamine-binding positions include 14–16 (TGG), N125, R168, S196, and Q297.

This sequence belongs to the glycosyltransferase 28 family. MurG subfamily.

The protein localises to the cell inner membrane. The enzyme catalyses di-trans,octa-cis-undecaprenyl diphospho-N-acetyl-alpha-D-muramoyl-L-alanyl-D-glutamyl-meso-2,6-diaminopimeloyl-D-alanyl-D-alanine + UDP-N-acetyl-alpha-D-glucosamine = di-trans,octa-cis-undecaprenyl diphospho-[N-acetyl-alpha-D-glucosaminyl-(1-&gt;4)]-N-acetyl-alpha-D-muramoyl-L-alanyl-D-glutamyl-meso-2,6-diaminopimeloyl-D-alanyl-D-alanine + UDP + H(+). It participates in cell wall biogenesis; peptidoglycan biosynthesis. Functionally, cell wall formation. Catalyzes the transfer of a GlcNAc subunit on undecaprenyl-pyrophosphoryl-MurNAc-pentapeptide (lipid intermediate I) to form undecaprenyl-pyrophosphoryl-MurNAc-(pentapeptide)GlcNAc (lipid intermediate II). In Nitrobacter hamburgensis (strain DSM 10229 / NCIMB 13809 / X14), this protein is UDP-N-acetylglucosamine--N-acetylmuramyl-(pentapeptide) pyrophosphoryl-undecaprenol N-acetylglucosamine transferase.